The sequence spans 716 residues: DNA ligase (716 aa).

Residues 49 to 53, 98 to 99, and Glu-131 each bind NAD(+); these read DAEYD and SL. Lys-133 (N6-AMP-lysine intermediate) is an active-site residue. Arg-154, Glu-191, Lys-308, and Lys-332 together coordinate NAD(+). Zn(2+)-binding residues include Cys-437, Cys-439, Cys-461, and Cys-467. Residues 638–716 enclose the BRCT domain; the sequence is KRHSPIATKT…EDEWLQLIAE (79 aa).

The protein belongs to the NAD-dependent DNA ligase family. LigA subfamily. It depends on Mg(2+) as a cofactor. Requires Mn(2+) as cofactor.

The catalysed reaction is NAD(+) + (deoxyribonucleotide)n-3'-hydroxyl + 5'-phospho-(deoxyribonucleotide)m = (deoxyribonucleotide)n+m + AMP + beta-nicotinamide D-nucleotide.. Functionally, DNA ligase that catalyzes the formation of phosphodiester linkages between 5'-phosphoryl and 3'-hydroxyl groups in double-stranded DNA using NAD as a coenzyme and as the energy source for the reaction. It is essential for DNA replication and repair of damaged DNA. In Bradyrhizobium sp. (strain BTAi1 / ATCC BAA-1182), this protein is DNA ligase.